Reading from the N-terminus, the 177-residue chain is Large ribosomal subunit protein uL6 (177 aa).

It belongs to the universal ribosomal protein uL6 family. As to quaternary structure, part of the 50S ribosomal subunit.

Its function is as follows. This protein binds to the 23S rRNA, and is important in its secondary structure. It is located near the subunit interface in the base of the L7/L12 stalk, and near the tRNA binding site of the peptidyltransferase center. The chain is Large ribosomal subunit protein uL6 from Rhizobium meliloti (strain 1021) (Ensifer meliloti).